We begin with the raw amino-acid sequence, 718 residues long: Sodium/myo-inositol cotransporter (718 aa).

At 1–9 (MRAVLDTAD) the chain is on the extracellular side. Residues 10-29 (IAIVALYFILVMCIGFFAMW) traverse the membrane as a helical segment. Over 30–38 (KSNRSTVSG) the chain is Cytoplasmic. A helical transmembrane segment spans residues 39-57 (YFLAGRSMTWVAIGASLFV). Residues 58 to 86 (SNIGSEHFIGLAGSGAASGFAVGAWEFNA) are Extracellular-facing. A helical transmembrane segment spans residues 87 to 110 (LLLLQLLGWVFIPIYIRSGVYTMP). The Cytoplasmic segment spans residues 111–123 (EYLSKRFGGHRIQ). A helical transmembrane segment spans residues 124–144 (VYFAALSLILYIFTKLSVDLY). Topologically, residues 145–157 (SGALFIQESLGWN) are extracellular. The chain crosses the membrane as a helical span at residues 158–183 (LYVSVILLIGMTALLTVTGGLVAVIY). At 184–186 (TDT) the chain is on the cytoplasmic side. The chain crosses the membrane as a helical span at residues 187–205 (LQALLMIIGALTLMIISIM). Residues 206-303 (EIGGFEEVKR…HAKGSTLMAG (98 aa)) are Extracellular-facing. Residue Asn-232 is glycosylated (N-linked (GlcNAc...) asparagine). A helical transmembrane segment spans residues 304 to 324 (FLKLLPMFIIVVPGMISRILF). At 325-353 (TDDIACINPEHCMLVCGSRAGCSNIAYPR) the chain is on the cytoplasmic side. The chain crosses the membrane as a helical span at residues 354–376 (LVMKLVPVGLRGLMMAVMIAALM). The Extracellular segment spans residues 377–406 (SDLDSIFNSASTIFTLDVYKLIRKSASSRE). A helical transmembrane segment spans residues 407 to 430 (LMIVGRIFVAFMVVISIAWVPIIV). The Cytoplasmic segment spans residues 431-443 (EMQGGQMYLYIQE). The helical transmembrane segment at 444–462 (VADYLTPPVAALFLLAIFW) threads the bilayer. Over 463–510 (KRCNEQGAFYGGMAGFVLGAVRLILAFAYRAPECDQPDNRPGFIKDIH) the chain is Extracellular. The chain crosses the membrane as a helical span at residues 511–532 (YMYVATGLFWVTGLITVIVSLL). The Cytoplasmic segment spans residues 533–695 (TPPPTKEQIR…QMLEETRQVK (163 aa)). Residues Ser-594 and Ser-632 each carry the phosphoserine modification. The helical transmembrane segment at 696 to 716 (VILNIGLFAVCSLGIFMFVYF) threads the bilayer. The Extracellular portion of the chain corresponds to 717–718 (SL).

This sequence belongs to the sodium:solute symporter (SSF) (TC 2.A.21) family. In terms of assembly, interacts with KCNQ2 (via the pore module). Interacts with KCNQ1; this interaction is direct. Forms coregulatory complexes with ion channels KCNQ2-KCNQ3 and KCNQ1-KCNE2.

The protein localises to the apical cell membrane. It is found in the basolateral cell membrane. It carries out the reaction myo-inositol(out) + 2 Na(+)(out) = myo-inositol(in) + 2 Na(+)(in). The catalysed reaction is scyllo-inositol(out) + 2 Na(+)(out) = scyllo-inositol(in) + 2 Na(+)(in). Its function is as follows. Electrogenic Na(+)-coupled sugar symporter that actively transports myo-inositol and its stereoisomer scyllo-inositol across the plasma membrane, with a Na(+) to sugar coupling ratio of 2:1. Maintains myo-inositol concentration gradient that defines cell volume and fluid balance during osmotic stress, in particular in the fetoplacental unit and central nervous system. Forms coregulatory complexes with voltage-gated K(+) ion channels, allosterically altering ion selectivity, voltage dependence and gating kinetics of the channel. In turn, K(+) efflux through the channel forms a local electrical gradient that modulates electrogenic Na(+)-coupled myo-inositol influx through the transporter. Associates with KCNQ1-KCNE2 channel in the apical membrane of choroid plexus epithelium and regulates the myo-inositol gradient between blood and cerebrospinal fluid with an impact on neuron excitability. Associates with KCNQ2-KCNQ3 channel altering ion selectivity, increasing Na(+) and Cs(+) permeation relative to K(+) permeation. Provides myo-inositol precursor for biosynthesis of phosphoinositides such as PI(4,5)P2, thus indirectly affecting the activity of phosphoinositide-dependent ion channels and Ca(2+) signaling upon osmotic stress. The sequence is that of Sodium/myo-inositol cotransporter from Homo sapiens (Human).